Here is a 103-residue protein sequence, read N- to C-terminus: MTKFENVTVVKKANIYDGGKVTSRTVEFADGTRKTLGIMMPGEYTFNTAEAEIMEMMSGELDIRLPNEDWKTLNTPESFNVPANSSFDLKIRTVTDYCCSYIK.

The protein belongs to the nucleoside phosphorylase PpnP family.

The catalysed reaction is a purine D-ribonucleoside + phosphate = a purine nucleobase + alpha-D-ribose 1-phosphate. It carries out the reaction adenosine + phosphate = alpha-D-ribose 1-phosphate + adenine. The enzyme catalyses cytidine + phosphate = cytosine + alpha-D-ribose 1-phosphate. It catalyses the reaction guanosine + phosphate = alpha-D-ribose 1-phosphate + guanine. The catalysed reaction is inosine + phosphate = alpha-D-ribose 1-phosphate + hypoxanthine. It carries out the reaction thymidine + phosphate = 2-deoxy-alpha-D-ribose 1-phosphate + thymine. The enzyme catalyses uridine + phosphate = alpha-D-ribose 1-phosphate + uracil. It catalyses the reaction xanthosine + phosphate = alpha-D-ribose 1-phosphate + xanthine. In terms of biological role, catalyzes the phosphorolysis of diverse nucleosides, yielding D-ribose 1-phosphate and the respective free bases. Can use uridine, adenosine, guanosine, cytidine, thymidine, inosine and xanthosine as substrates. Also catalyzes the reverse reactions. The chain is Pyrimidine/purine nucleoside phosphorylase from Sulfurimonas denitrificans (strain ATCC 33889 / DSM 1251) (Thiomicrospira denitrificans (strain ATCC 33889 / DSM 1251)).